We begin with the raw amino-acid sequence, 227 residues long: ATP synthase subunit a (227 aa).

A run of 5 helical transmembrane segments spans residues 16–36, 79–99, 105–125, 176–196, and 202–222; these read AFVYAFHFCLVALIILIVAYI, LVATIGFIVFFSNVIGIIPGF, SLNLTLVLALVVFIYYNFEGI, LFLLAMLTLAPWFAPLPAFAL, and VLQTFIFMMLTYVYLAGAVAI.

It belongs to the ATPase A chain family. F-type ATPases have 2 components, CF(1) - the catalytic core - and CF(0) - the membrane proton channel. CF(1) has five subunits: alpha(3), beta(3), gamma(1), delta(1), epsilon(1). CF(0) has three main subunits: a(1), b(2) and c(9-12). The alpha and beta chains form an alternating ring which encloses part of the gamma chain. CF(1) is attached to CF(0) by a central stalk formed by the gamma and epsilon chains, while a peripheral stalk is formed by the delta and b chains.

It is found in the cell inner membrane. Key component of the proton channel; it plays a direct role in the translocation of protons across the membrane. This chain is ATP synthase subunit a, found in Campylobacter concisus (strain 13826).